Here is a 544-residue protein sequence, read N- to C-terminus: Chaperonin GroEL 2 (544 aa).

ATP is bound by residues 29-32, 86-90, Gly413, 479-481, and Asp495; these read TLGP, DGTTT, and NAA.

This sequence belongs to the chaperonin (HSP60) family. In terms of assembly, forms a cylinder of 14 subunits composed of two heptameric rings stacked back-to-back. Interacts with the co-chaperonin GroES.

Its subcellular location is the cytoplasm. It catalyses the reaction ATP + H2O + a folded polypeptide = ADP + phosphate + an unfolded polypeptide.. In terms of biological role, together with its co-chaperonin GroES, plays an essential role in assisting protein folding. The GroEL-GroES system forms a nano-cage that allows encapsulation of the non-native substrate proteins and provides a physical environment optimized to promote and accelerate protein folding. The sequence is that of Chaperonin GroEL 2 from Trichodesmium erythraeum (strain IMS101).